The sequence spans 148 residues: Isotocin-neurophysin IT 2 (148 aa).

A signal peptide spans 1-20 (MSGSMSSVFSLLYLLSVCSA). An intrachain disulfide couples cysteine 21 to cysteine 26. Glycine 29 bears the Glycine amide mark. 7 cysteine pairs are disulfide-bonded: cysteine 42-cysteine 86, cysteine 45-cysteine 59, cysteine 53-cysteine 76, cysteine 60-cysteine 66, cysteine 93-cysteine 105, cysteine 99-cysteine 117, and cysteine 106-cysteine 111.

Belongs to the vasopressin/oxytocin family.

In terms of biological role, isotocin causes contraction of smooth muscles. The protein is Isotocin-neurophysin IT 2 of Catostomus commersonii (White sucker).